A 112-amino-acid chain; its full sequence is uncharacterized protein (112 aa).

This is an uncharacterized protein from Rickettsia conorii (strain ATCC VR-613 / Malish 7).